Here is a 371-residue protein sequence, read N- to C-terminus: NADP-dependent oxidoreductase lnaE (371 aa).

Residues 172 to 175, Lys198, Tyr214, Asn237, 277 to 283, and 307 to 309 each bind NADP(+); these read DEIG, YGTIAEQ, and FGL.

The protein belongs to the NADP-dependent oxidoreductase L4BD family.

The protein operates within secondary metabolite biosynthesis. In terms of biological role, NADP-dependent oxidoreductase; part of the lna gene cluster that mediates the biosynthesis of diastereomeric piperazines. Lna and lnb clusters encode sets of enzymes that produce overlapping sets of previously undescribed metabolites such as piperazinomycin-like metabolites or morpholine. The lna and lnb biosynthetic pathways appear to be part of a signaling network that controls the formation of sclerotia, a resilient overwintering structure. One primary function of the non-canonical nonribosomal peptide synthetases lnaA and lnbA consists in the reduction of L-tyrosine. The presence in the clusters of tailoring enzymes such as the oxidoreductases lnaB, lnbB, lnaE or lnbE, as well as of the cytochrome P450 monooxygenases lnaC, lnaD, or lnbC, might explain formation of various diastereomeric piperazines. This Aspergillus flavus (strain ATCC 200026 / FGSC A1120 / IAM 13836 / NRRL 3357 / JCM 12722 / SRRC 167) protein is NADP-dependent oxidoreductase lnaE.